Here is a 688-residue protein sequence, read N- to C-terminus: DNA-directed RNA polymerase subunit beta' (688 aa).

Zn(2+) contacts are provided by C69, C71, C87, and C90. The Mg(2+) site is built by D497, D499, and D501.

It belongs to the RNA polymerase beta' chain family. RpoC1 subfamily. As to quaternary structure, in plastids the minimal PEP RNA polymerase catalytic core is composed of four subunits: alpha, beta, beta', and beta''. When a (nuclear-encoded) sigma factor is associated with the core the holoenzyme is formed, which can initiate transcription. The cofactor is Mg(2+). Requires Zn(2+) as cofactor.

Its subcellular location is the plastid. It localises to the chloroplast. It catalyses the reaction RNA(n) + a ribonucleoside 5'-triphosphate = RNA(n+1) + diphosphate. In terms of biological role, DNA-dependent RNA polymerase catalyzes the transcription of DNA into RNA using the four ribonucleoside triphosphates as substrates. This is DNA-directed RNA polymerase subunit beta' from Sinapis alba (White mustard).